The primary structure comprises 318 residues: MTEEFRHYTVLLKETVDGLQVKPDGVYVDCTLGGAGHSEYLLTQLNEHGHLYAFDQDQKALAHAKTRLQKYVDKGQVTFIKSNFRNIKEELAEHGVFHVDGILYDLGVSSPQLDEAERGFSYHQDAPLDMRMDQDAPLTAREVVNTYSYSELVKIFFRYGEEKFSKQIAREIERVREKQPIETTGELVEIIKTAIPAPARRKGGHPAKRIFQAIRIAVNDELGAVEESLEQAIDLLAKNGRISVITFHSLEDRIVKTMFKEYSTVQDLPPGIPVVPEEFQPELKVITRKPILPSDSELSENNRSRSAKLRIAEKIKSR.

S-adenosyl-L-methionine is bound by residues 35–37 (AGH), Asp55, Phe84, Asp105, and Gln112. Positions 294–318 (SDSELSENNRSRSAKLRIAEKIKSR) are disordered.

Belongs to the methyltransferase superfamily. RsmH family.

It localises to the cytoplasm. The enzyme catalyses cytidine(1402) in 16S rRNA + S-adenosyl-L-methionine = N(4)-methylcytidine(1402) in 16S rRNA + S-adenosyl-L-homocysteine + H(+). In terms of biological role, specifically methylates the N4 position of cytidine in position 1402 (C1402) of 16S rRNA. The polypeptide is Ribosomal RNA small subunit methyltransferase H (Enterococcus faecalis (strain ATCC 700802 / V583)).